We begin with the raw amino-acid sequence, 346 residues long: Heat-inducible transcription repressor HrcA (346 aa).

Belongs to the HrcA family.

Negative regulator of class I heat shock genes (grpE-dnaK-dnaJ and groELS operons). Prevents heat-shock induction of these operons. The sequence is that of Heat-inducible transcription repressor HrcA from Kineococcus radiotolerans (strain ATCC BAA-149 / DSM 14245 / SRS30216).